Reading from the N-terminus, the 247-residue chain is Adenosylcobinamide-GDP ribazoletransferase (247 aa).

Transmembrane regions (helical) follow at residues 34–54 (IVMF…IFIL), 59–79 (CGIP…TGGF), 113–133 (GGLA…ELAL), 138–158 (VLAA…LLMY), and 194–214 (VLLP…AIFI).

It belongs to the CobS family. The cofactor is Mg(2+).

Its subcellular location is the cell inner membrane. It catalyses the reaction alpha-ribazole + adenosylcob(III)inamide-GDP = adenosylcob(III)alamin + GMP + H(+). The enzyme catalyses alpha-ribazole 5'-phosphate + adenosylcob(III)inamide-GDP = adenosylcob(III)alamin 5'-phosphate + GMP + H(+). It participates in cofactor biosynthesis; adenosylcobalamin biosynthesis; adenosylcobalamin from cob(II)yrinate a,c-diamide: step 7/7. In terms of biological role, joins adenosylcobinamide-GDP and alpha-ribazole to generate adenosylcobalamin (Ado-cobalamin). Also synthesizes adenosylcobalamin 5'-phosphate from adenosylcobinamide-GDP and alpha-ribazole 5'-phosphate. This chain is Adenosylcobinamide-GDP ribazoletransferase, found in Salmonella arizonae (strain ATCC BAA-731 / CDC346-86 / RSK2980).